The following is a 414-amino-acid chain: Tryptophan synthase beta chain (414 aa).

N6-(pyridoxal phosphate)lysine is present on K108.

It belongs to the TrpB family. As to quaternary structure, tetramer of two alpha and two beta chains. The cofactor is pyridoxal 5'-phosphate.

It carries out the reaction (1S,2R)-1-C-(indol-3-yl)glycerol 3-phosphate + L-serine = D-glyceraldehyde 3-phosphate + L-tryptophan + H2O. It participates in amino-acid biosynthesis; L-tryptophan biosynthesis; L-tryptophan from chorismate: step 5/5. The beta subunit is responsible for the synthesis of L-tryptophan from indole and L-serine. This Beijerinckia indica subsp. indica (strain ATCC 9039 / DSM 1715 / NCIMB 8712) protein is Tryptophan synthase beta chain.